A 422-amino-acid polypeptide reads, in one-letter code: E3 ubiquitin-protein ligase CBLL2 (422 aa).

The segment at 54–94 (CDKCDLPIKIYGRIIPCKHAFCYNCANLYDKIGYKICPRCS) adopts an RING-type zinc-finger fold. The segment at 93–151 (CSYPVLRIEEHKRGSVFMCSVVQGCKRTYLSQKSLQAHIKRRHKRARKQVASASLEKLR) is HYB domain. The segment at 109-135 (FMCSVVQGCKRTYLSQKSLQAHIKRRH) adopts a C2H2-type zinc-finger fold. Disordered regions lie at residues 190–213 (MQQM…PELS) and 378–422 (QTDA…HRPY). The segment covering 195-205 (HEQHNQPHKDL) has biased composition (basic and acidic residues). The segment covering 393–405 (LPPPPPTWSPPPS) has biased composition (pro residues). The span at 410–422 (GSHHSYQRRHRPY) shows a compositional bias: basic residues.

In terms of assembly, homodimer.

The protein resides in the cytoplasm. The enzyme catalyses S-ubiquitinyl-[E2 ubiquitin-conjugating enzyme]-L-cysteine + [acceptor protein]-L-lysine = [E2 ubiquitin-conjugating enzyme]-L-cysteine + N(6)-ubiquitinyl-[acceptor protein]-L-lysine.. Its pathway is protein modification; protein ubiquitination. E3 ubiquitin ligase catalyzing the covalent attachment of ubiquitin moieties onto substrate proteins. May operate on tyrosine-phosphorylated SRC substrates. The protein is E3 ubiquitin-protein ligase CBLL2 (CBLL2) of Macaca fascicularis (Crab-eating macaque).